Consider the following 232-residue polypeptide: Sugar fermentation stimulation protein homolog (232 aa).

This sequence belongs to the SfsA family.

This chain is Sugar fermentation stimulation protein homolog, found in Pelagibacter ubique (strain HTCC1062).